A 154-amino-acid polypeptide reads, in one-letter code: Ribonuclease H (154 aa).

The RNase H type-1 domain maps to 3 to 144; the sequence is ELPVVSIFTD…ADQLARDGVA (142 aa). Asp-12, Glu-50, Asp-72, and Asp-136 together coordinate Mg(2+).

It belongs to the RNase H family. Monomer. It depends on Mg(2+) as a cofactor.

The protein localises to the cytoplasm. The catalysed reaction is Endonucleolytic cleavage to 5'-phosphomonoester.. Functionally, endonuclease that specifically degrades the RNA of RNA-DNA hybrids. The sequence is that of Ribonuclease H from Bradyrhizobium sp. (strain ORS 278).